The following is a 319-amino-acid chain: ATP-dependent 6-phosphofructokinase (319 aa).

Position 11 (Gly11) interacts with ATP. 21–25 (RAVVR) serves as a coordination point for ADP. Residues 72-73 (RY) and 102-105 (GDGS) each bind ATP. Residue Asp103 participates in Mg(2+) binding. Residue 125–127 (TID) participates in substrate binding. The Proton acceptor role is filled by Asp127. Arg154 provides a ligand contact to ADP. Substrate contacts are provided by residues Arg162 and 169 to 171 (MGR). ADP contacts are provided by residues 185–187 (GAE), Arg211, and 213–215 (KKH). Residues Glu222, Arg243, and 249-252 (HVQR) each bind substrate.

It belongs to the phosphofructokinase type A (PFKA) family. ATP-dependent PFK group I subfamily. Prokaryotic clade 'B1' sub-subfamily. Homotetramer. Mg(2+) is required as a cofactor.

It localises to the cytoplasm. The enzyme catalyses beta-D-fructose 6-phosphate + ATP = beta-D-fructose 1,6-bisphosphate + ADP + H(+). It functions in the pathway carbohydrate degradation; glycolysis; D-glyceraldehyde 3-phosphate and glycerone phosphate from D-glucose: step 3/4. Its activity is regulated as follows. Allosterically activated by ADP and other diphosphonucleosides, and allosterically inhibited by phosphoenolpyruvate. Its function is as follows. Catalyzes the phosphorylation of D-fructose 6-phosphate to fructose 1,6-bisphosphate by ATP, the first committing step of glycolysis. The protein is ATP-dependent 6-phosphofructokinase of Listeria monocytogenes serotype 4b (strain CLIP80459).